A 105-amino-acid chain; its full sequence is Nitrogen fixation nifHD region glnB-like protein 1 (105 aa).

The protein belongs to the P(II) protein family.

Functionally, could be involved in the regulation of nitrogen fixation. This Methanococcus maripaludis (Methanococcus deltae) protein is Nitrogen fixation nifHD region glnB-like protein 1 (glnBI).